We begin with the raw amino-acid sequence, 361 residues long: Zinc transporter ZIP13 (361 aa).

Residues 1–6 (MPGCPC) lie on the Lumenal side of the membrane. Residues 7-27 (PGCGMAGQRLLFLTVLALELL) form a helical membrane-spanning segment. The Cytoplasmic segment spans residues 28–68 (ERAGGSQPALRSLGAAAACRLDSKESESWGALLSGERLDTW). A helical membrane pass occupies residues 69-89 (ICSLLGSLMVGLSGVFPLLVI). Residues 90 to 108 (PLEMGTMLQSEAGAWRLKQ) are Lumenal-facing. Residues 109 to 129 (LLSFALGGLLGNVFLHLLPEA) form a helical membrane-spanning segment. The Cytoplasmic portion of the chain corresponds to 130–150 (WAYTCNISPGVEGQSLQRQQQ). The chain crosses the membrane as a helical span at residues 151-171 (LGLWVIAGFLTFLALEKMFLN). Residues 172–233 (CKEEDPSQAP…TIDNFTHGLA (62 aa)) lie on the Lumenal side of the membrane. The chain crosses the membrane as a helical span at residues 234 to 254 (VAASFLVSKKIGLLTTMAILL). Positions 255 to 260 (HEIPHE) match the XEXPHE-motif motif. Residues 255–276 (HEIPHEVGDFAILLRAGFDRWT) lie on the Cytoplasmic side of the membrane. A helical membrane pass occupies residues 277–297 (AAKLQFSTALGGLLGACFAIC). Residues 298–307 (TQSPKGVEET) are Lumenal-facing. The helical transmembrane segment at 308–328 (VVWTLPFTSGGFLYVALVNVL) threads the bilayer. Over 329 to 340 (PDLLEEDDPWHL) the chain is Cytoplasmic. A helical transmembrane segment spans residues 341 to 361 (NPPLPTGTPCSRCCCSAPVSW).

Belongs to the ZIP transporter (TC 2.A.5) family. Homodimer.

It is found in the golgi apparatus membrane. The protein resides in the cytoplasmic vesicle membrane. The protein localises to the endoplasmic reticulum membrane. It catalyses the reaction Zn(2+)(in) = Zn(2+)(out). Functionally, functions as a zinc transporter transporting Zn(2+) from the Golgi apparatus to the cytosol and thus influences the zinc level at least in areas of the cytosol. May regulate beige adipocyte differentiation. This chain is Zinc transporter ZIP13, found in Rattus norvegicus (Rat).